Here is a 107-residue protein sequence, read N- to C-terminus: MEVNKLIEELVEVIKDRKNDIIFSYLFEEESDKILKKIGEKSSEVIIACKNASKEEQVHEISDLIYNLMVLMMKQNIEIENVIEELGKRRNMTLNKKSTKSVYPSIH.

This sequence belongs to the PRA-PH family.

It is found in the cytoplasm. The catalysed reaction is 1-(5-phospho-beta-D-ribosyl)-ATP + H2O = 1-(5-phospho-beta-D-ribosyl)-5'-AMP + diphosphate + H(+). The protein operates within amino-acid biosynthesis; L-histidine biosynthesis; L-histidine from 5-phospho-alpha-D-ribose 1-diphosphate: step 2/9. This is Phosphoribosyl-ATP pyrophosphatase (hisE) from Clostridium tetani (strain Massachusetts / E88).